The following is a 229-amino-acid chain: Uracil-DNA glycosylase (229 aa).

The active-site Proton acceptor is D72.

It belongs to the uracil-DNA glycosylase (UDG) superfamily. UNG family.

Its subcellular location is the cytoplasm. It carries out the reaction Hydrolyzes single-stranded DNA or mismatched double-stranded DNA and polynucleotides, releasing free uracil.. Excises uracil residues from the DNA which can arise as a result of misincorporation of dUMP residues by DNA polymerase or due to deamination of cytosine. The polypeptide is Uracil-DNA glycosylase (Dichelobacter nodosus (strain VCS1703A)).